Here is a 295-residue protein sequence, read N- to C-terminus: tRNA(Ile)-lysidine synthase (295 aa).

10 to 15 is an ATP binding site; that stretch reads SGGPDS.

Belongs to the tRNA(Ile)-lysidine synthase family.

It localises to the cytoplasm. The enzyme catalyses cytidine(34) in tRNA(Ile2) + L-lysine + ATP = lysidine(34) in tRNA(Ile2) + AMP + diphosphate + H(+). Ligates lysine onto the cytidine present at position 34 of the AUA codon-specific tRNA(Ile) that contains the anticodon CAU, in an ATP-dependent manner. Cytidine is converted to lysidine, thus changing the amino acid specificity of the tRNA from methionine to isoleucine. The protein is tRNA(Ile)-lysidine synthase of Malacoplasma penetrans (strain HF-2) (Mycoplasma penetrans).